Here is a 348-residue protein sequence, read N- to C-terminus: NADH-quinone oxidoreductase subunit H (348 aa).

A run of 8 helical transmembrane segments spans residues 10 to 30 (LPFLIIVGKTLLLLVVLLVLV), 82 to 102 (GVFLLAPFVSATLALSTWAVI), 115 to 135 (VGLLYILAISSLEVYGVIMGG), 161 to 181 (IGFVLVTVILISGSLDLTTIV), 199 to 219 (FLDWNWLVLFPMFIIFFISAL), 251 to 271 (LFFLGEYVAIVLMCALTTILF), 287 to 307 (IPGVIWFVLKVCFVFFWFAIV), and 322 to 342 (LGWKVFLPLSLAMVVITAAFL).

The protein belongs to the complex I subunit 1 family. NDH-1 is composed of 14 different subunits. Subunits NuoA, H, J, K, L, M, N constitute the membrane sector of the complex.

Its subcellular location is the cell inner membrane. It carries out the reaction a quinone + NADH + 5 H(+)(in) = a quinol + NAD(+) + 4 H(+)(out). Its function is as follows. NDH-1 shuttles electrons from NADH, via FMN and iron-sulfur (Fe-S) centers, to quinones in the respiratory chain. The immediate electron acceptor for the enzyme in this species is believed to be ubiquinone. Couples the redox reaction to proton translocation (for every two electrons transferred, four hydrogen ions are translocated across the cytoplasmic membrane), and thus conserves the redox energy in a proton gradient. This subunit may bind ubiquinone. The chain is NADH-quinone oxidoreductase subunit H from Bartonella tribocorum (strain CIP 105476 / IBS 506).